A 74-amino-acid polypeptide reads, in one-letter code: uncharacterized protein (74 aa).

The helical transmembrane segment at 15–32 (FLHALTVTFLSDIFVWLV) threads the bilayer.

Its subcellular location is the membrane. This is an uncharacterized protein from Saccharomyces cerevisiae (strain ATCC 204508 / S288c) (Baker's yeast).